A 613-amino-acid polypeptide reads, in one-letter code: Kelch-like protein 36 (613 aa).

The 68-residue stretch at 45–112 (CDVVLVVEEQ…LYSSELELDG (68 aa)) folds into the BTB domain. The region spanning 147-249 (YLYLQELASI…PEDILLQRVK (103 aa)) is the BACK domain. Kelch repeat units follow at residues 294-343 (CLLF…VLGG), 344-395 (FIFV…SIED), 396-442 (MLVA…IYKD), 444-491 (VYIS…SLGD), 492-544 (SIYS…VWQG), and 545-593 (RIYI…VCAL).

In terms of assembly, interacts with CUL3.

It functions in the pathway protein modification; protein ubiquitination. In terms of biological role, probable substrate-specific adapter of an E3 ubiquitin-protein ligase complex which mediates the ubiquitination and subsequent proteasomal degradation of target proteins. The sequence is that of Kelch-like protein 36 (Klhl36) from Rattus norvegicus (Rat).